Here is a 243-residue protein sequence, read N- to C-terminus: Probable 2-phosphosulfolactate phosphatase (243 aa).

It belongs to the ComB family. It depends on Mg(2+) as a cofactor.

The enzyme catalyses (2R)-O-phospho-3-sulfolactate + H2O = (2R)-3-sulfolactate + phosphate. In Synechococcus sp. (strain CC9605), this protein is Probable 2-phosphosulfolactate phosphatase.